Consider the following 358-residue polypeptide: Methylthioribose-1-phosphate isomerase (358 aa).

Substrate-binding positions include 54 to 56, arginine 96, and glutamine 205; that span reads RGA. Aspartate 246 acts as the Proton donor in catalysis. 256–257 provides a ligand contact to substrate; sequence NK.

Belongs to the eIF-2B alpha/beta/delta subunits family. MtnA subfamily.

The enzyme catalyses 5-(methylsulfanyl)-alpha-D-ribose 1-phosphate = 5-(methylsulfanyl)-D-ribulose 1-phosphate. It functions in the pathway amino-acid biosynthesis; L-methionine biosynthesis via salvage pathway; L-methionine from S-methyl-5-thio-alpha-D-ribose 1-phosphate: step 1/6. Catalyzes the interconversion of methylthioribose-1-phosphate (MTR-1-P) into methylthioribulose-1-phosphate (MTRu-1-P). This Pseudomonas aeruginosa (strain UCBPP-PA14) protein is Methylthioribose-1-phosphate isomerase.